A 479-amino-acid polypeptide reads, in one-letter code: 3-isopropylmalate dehydratase large subunit (479 aa).

[4Fe-4S] cluster-binding residues include C350, C415, and C418.

Belongs to the aconitase/IPM isomerase family. LeuC type 1 subfamily. Heterodimer of LeuC and LeuD. The cofactor is [4Fe-4S] cluster.

It catalyses the reaction (2R,3S)-3-isopropylmalate = (2S)-2-isopropylmalate. It functions in the pathway amino-acid biosynthesis; L-leucine biosynthesis; L-leucine from 3-methyl-2-oxobutanoate: step 2/4. Functionally, catalyzes the isomerization between 2-isopropylmalate and 3-isopropylmalate, via the formation of 2-isopropylmaleate. This is 3-isopropylmalate dehydratase large subunit from Caulobacter vibrioides (strain ATCC 19089 / CIP 103742 / CB 15) (Caulobacter crescentus).